The sequence spans 3412 residues: Genome polyprotein (3412 aa).

Positions 2-15 are interaction with host EXOC1; the sequence is SKKPGKPGRNRVVN. Over 2–108 the chain is Cytoplasmic; the sequence is SKKPGKPGRN…PSKKRGGTRS (107 aa). Residues 37–72 are hydrophobic; homodimerization of capsid protein C; that stretch reads LLDGRGPVRFILAILTFFRFTALQPTEALKRRWRAV. Residues 104–121 constitute a propeptide, ER anchor for the capsid protein C, removed in mature form by serine protease NS3; it reads GGTRSLLGLAALIGLASS. A helical transmembrane segment spans residues 109-129; sequence LLGLAALIGLASSLQLSTYQG. Residues 130-247 are Extracellular-facing; sequence KVLMSINKTD…TTKYLTKVEN (118 aa). The N-linked (GlcNAc...) asparagine; by host glycan is linked to Asn136. Residues 248–268 traverse the membrane as a helical segment; that stretch reads WVLRNPGYALVALAIGWMLGS. Residues 269–273 lie on the Cytoplasmic side of the membrane; sequence NNTQR. Residues 274–288 traverse the membrane as a helical segment; it reads VVFVIMLMLIAPAYS. Topologically, residues 289 to 741 are extracellular; that stretch reads FNCLGTSNRD…QVFGGAFRTL (453 aa). Intrachain disulfides connect Cys291–Cys318, Cys348–Cys404, Cys348–Cys409, Cys362–Cys393, Cys380–Cys404, Cys380–Cys409, Cys478–Cys576, and Cys593–Cys624. Residues 386 to 399 form a fusion peptide region; the sequence is DRGWGNGCGLFGKG. Residues 742-762 form a helical membrane-spanning segment; that stretch reads FGGMSWITQGLLGALLLWMGL. At 763–768 the chain is on the cytoplasmic side; the sequence is QARDRS. The helical transmembrane segment at 769–789 threads the bilayer; that stretch reads ISLTLLAVGGILIFLATSVQA. The Extracellular segment spans residues 790–1214; the sequence is DSGCAIDLQR…AFAEMNTGGD (425 aa). 2 cysteine pairs are disulfide-bonded: Cys793/Cys804 and Cys844/Cys932. N-linked (GlcNAc...) asparagine; by host glycosylation is found at Asn919, Asn964, and Asn996. Cystine bridges form between Cys968/Cys1012, Cys1069/Cys1118, Cys1080/Cys1101, Cys1080/Cys1102, Cys1101/Cys1105, and Cys1102/Cys1105. Residues 1215 to 1235 form a helical membrane-spanning segment; that stretch reads VIHLALVAVFKVQPAFLAGLF. The Cytoplasmic segment spans residues 1236-1245; sequence LRMQWSNQEN. Residues 1246–1266 form a helical membrane-spanning segment; that stretch reads ILMVIGAAFLQMAANDLKLEV. Residues 1267-1288 lie on the Lumenal side of the membrane; sequence LPILNAMSIAWMLIRAMKEGKV. The helical transmembrane segment at 1289–1303 threads the bilayer; sequence AMYALPILCALTPGM. Arg1304 is a topological domain (cytoplasmic). Residues 1305–1325 form a helical membrane-spanning segment; the sequence is MAGLDVIRCLLLIIGIVTLLN. At 1326–1339 the chain is on the lumenal side; it reads ERRESVAKKKGGYL. A helical transmembrane segment spans residues 1340–1360; that stretch reads LAAALCQAGVCSPLIMMGGLI. Residues 1361 to 1369 are Cytoplasmic-facing; sequence LAHPNGKRS. A helical membrane pass occupies residues 1370–1390; it reads WPASEVLTGVGLMCALAGGLL. Topologically, residues 1391–1393 are lumenal; the sequence is EFE. The chain crosses the membrane as a helical span at residues 1394–1414; it reads ETSMVVPFAIAGLMYITYTVS. The Cytoplasmic segment spans residues 1415–1471; that stretch reads GKAAEMWIEKAADITWEQNAEITGTSPRLDVDLDSHGNFKLLNDPGAPVHLFALRFI. Positions 1422-1461 are interacts with and activates NS3 protease; sequence IEKAADITWEQNAEITGTSPRLDVDLDSHGNFKLLNDPGA. An intramembrane region (helical) is located at residues 1472 to 1492; that stretch reads LLGLSARFHWFIPFGVLGFWL. Over 1493-2167 the chain is Cytoplasmic; that stretch reads LGKHSKRGGA…KEALAELPDS (675 aa). The region spanning 1500-1677 is the Peptidase S7 domain; that stretch reads GGALWDVPSP…ERTEEPIPDA (178 aa). Catalysis depends on charge relay system; for serine protease NS3 activity residues His1550, Asp1574, and Ser1634. The Helicase ATP-binding domain maps to 1680 to 1836; that stretch reads EEMLRKRKLT…DSNSPILDVE (157 aa). The interval 1684–1687 is important for RNA-binding; the sequence is RKRK. 1693-1700 is an ATP binding site; the sequence is LHPGAGKT. A DEAH box motif is present at residues 1784-1787; it reads DEAH. In terms of domain architecture, Helicase C-terminal spans 1847-2011; the sequence is GYEWITNFTG…GLVAQMYQPE (165 aa). The segment at 2162–2166 is regulates the ATPase activity of NS3 helicase; it reads AELPD. A helical transmembrane segment spans residues 2168–2188; the sequence is LETLLLIGMLCVMSMGTFIFL. The Lumenal segment spans residues 2189–2193; that stretch reads MNRKG. The helical intramembrane region spans 2194–2214; that stretch reads VGKMGLGAFVMTLATALLWAA. Residue Glu2215 is a topological domain, lumenal. The helical transmembrane segment at 2216-2236 threads the bilayer; that stretch reads VPGTQIAGVLLIVFLLMIVLI. Residues 2237–2251 lie on the Cytoplasmic side of the membrane; that stretch reads PEPEKQRSQTDNQLA. A helical membrane pass occupies residues 2252 to 2266; it reads VFLICIMTLMGVVAA. Over 2267-2308 the chain is Lumenal; that stretch reads NEMGLLEKTKSDIAKLFGSQPGSVGFATRTTPWDISLDIKPA. The helical intramembrane region spans 2309–2329; it reads TAWALYAAATMVMTPLIKHLI. Residues 2330–2376 are Lumenal-facing; sequence TTQYVNFSLTAIASQAGVLLGLTNGMPFTAMDLSVPLLVLGCWNQMT. A helical transmembrane segment spans residues 2377-2397; that stretch reads LPSLAVAVMLLAIHYAFMIPG. At 2398 to 2440 the chain is on the cytoplasmic side; that stretch reads WQAEAMRAAQRRTAAGIMKNAVVDGIVATDIPDLSPATPMTEK. The chain crosses the membrane as a helical span at residues 2441 to 2461; the sequence is KMGQILLIAAAVLAVLVRPGI. The Lumenal segment spans residues 2462–2466; the sequence is CSIKE. A helical transmembrane segment spans residues 2467–2487; sequence FGVLGSAALVTLIEGTAGVVW. Residues 2488–3412 lie on the Cytoplasmic side of the membrane; it reads NCTTAVGLCN…IGEEEYRDYM (925 aa). Positions 2525–2790 constitute an mRNA cap 0-1 NS5-type MT domain; that stretch reads GGGKGATLGE…DVNLGSGTRS (266 aa). Ser2580 lines the S-adenosyl-L-methionine pocket. Phosphoserine is present on Ser2580. Lys2585 serves as the catalytic For 2'-O-MTase activity. S-adenosyl-L-methionine contacts are provided by Gly2610, Trp2611, Thr2628, Lys2629, Asp2655, and Val2656. Catalysis depends on Asp2670, which acts as the For 2'-O-MTase activity. Ile2671 provides a ligand contact to S-adenosyl-L-methionine. Active-site for 2'-O-MTase activity residues include Lys2706 and Glu2742. S-adenosyl-L-methionine is bound at residue Tyr2744. A compositionally biased stretch (basic and acidic residues) spans 2771–2780; that stretch reads QNRSGPRYEE. The segment at 2771–2791 is disordered; the sequence is QNRSGPRYEEDVNLGSGTRSV. Residues Glu2964, His2968, Cys2973, and Cys2976 each contribute to the Zn(2+) site. Residues 3054–3206 form the RdRp catalytic domain; the sequence is GKMYADDTAG…KPIDDRFATA (153 aa). Positions 3241, 3257, and 3376 each coordinate Zn(2+).

In the N-terminal section; belongs to the class I-like SAM-binding methyltransferase superfamily. mRNA cap 0-1 NS5-type methyltransferase family. In terms of assembly, homodimer. Interacts (via N-terminus) with host EXOC1 (via C-terminus); this interaction results in EXOC1 degradation through the proteasome degradation pathway. Forms heterodimers with envelope protein E in the endoplasmic reticulum and Golgi. As to quaternary structure, homodimer; in the endoplasmic reticulum and Golgi. Interacts with protein prM. Interacts with non-structural protein 1. In terms of assembly, homodimer; Homohexamer when secreted. Interacts with envelope protein E. NS1 interacts with NS4B. Interacts with host complement protein CFH; this interaction leads to the degradation of C3. Interacts (via N-terminus) with serine protease NS3. As to quaternary structure, forms a heterodimer with serine protease NS3. May form homooligomers. In terms of assembly, forms a heterodimer with NS2B. Interacts with non-structural protein 2A (via N-terminus). Interacts with NS4B. Interacts with unphosphorylated RNA-directed RNA polymerase NS5; this interaction stimulates RNA-directed RNA polymerase NS5 guanylyltransferase activity. Interacts with serine protease NS3. As to quaternary structure, homodimer. Interacts with host STAT2; this interaction inhibits the phosphorylation of the latter, and, when all viral proteins are present (polyprotein), targets STAT2 for degradation. Interacts with serine protease NS3. In terms of processing, specific enzymatic cleavages in vivo yield mature proteins. Cleavages in the lumen of endoplasmic reticulum are performed by host signal peptidase, whereas cleavages in the cytoplasmic side are performed by serine protease NS3. Signal cleavage at the 2K-4B site requires a prior NS3 protease-mediated cleavage at the 4A-2K site. Cleaved in post-Golgi vesicles by a host furin, releasing the mature small envelope protein M, and peptide pr. This cleavage is incomplete as up to 30% of viral particles still carry uncleaved prM. Post-translationally, N-glycosylated. In terms of processing, N-glycosylated. The excreted form is glycosylated and this is required for efficient secretion of the protein from infected cells. Phosphorylated on serines residues. This phosphorylation may trigger NS5 nuclear localization.

It localises to the virion. It is found in the host nucleus. The protein resides in the host cytoplasm. The protein localises to the host perinuclear region. Its subcellular location is the secreted. It localises to the virion membrane. It is found in the host endoplasmic reticulum membrane. It catalyses the reaction Selective hydrolysis of -Xaa-Xaa-|-Yaa- bonds in which each of the Xaa can be either Arg or Lys and Yaa can be either Ser or Ala.. It carries out the reaction RNA(n) + a ribonucleoside 5'-triphosphate = RNA(n+1) + diphosphate. The enzyme catalyses a ribonucleoside 5'-triphosphate + H2O = a ribonucleoside 5'-diphosphate + phosphate + H(+). The catalysed reaction is ATP + H2O = ADP + phosphate + H(+). It catalyses the reaction a 5'-end (5'-triphosphoguanosine)-ribonucleoside in mRNA + S-adenosyl-L-methionine = a 5'-end (N(7)-methyl 5'-triphosphoguanosine)-ribonucleoside in mRNA + S-adenosyl-L-homocysteine. It carries out the reaction a 5'-end (N(7)-methyl 5'-triphosphoguanosine)-ribonucleoside in mRNA + S-adenosyl-L-methionine = a 5'-end (N(7)-methyl 5'-triphosphoguanosine)-(2'-O-methyl-ribonucleoside) in mRNA + S-adenosyl-L-homocysteine + H(+). Plays a role in virus budding by binding to the cell membrane and gathering the viral RNA into a nucleocapsid that forms the core of a mature virus particle. During virus entry, may induce genome penetration into the host cytoplasm after hemifusion induced by the surface proteins. Can migrate to the cell nucleus where it modulates host functions. Overcomes the anti-viral effects of host EXOC1 by sequestering and degrading the latter through the proteasome degradation pathway. Its function is as follows. Inhibits RNA silencing by interfering with host Dicer. In terms of biological role, prevents premature fusion activity of envelope proteins in trans-Golgi by binding to envelope protein E at pH6.0. After virion release in extracellular space, gets dissociated from E dimers. Functionally, acts as a chaperone for envelope protein E during intracellular virion assembly by masking and inactivating envelope protein E fusion peptide. prM is the only viral peptide matured by host furin in the trans-Golgi network probably to avoid catastrophic activation of the viral fusion activity in acidic Golgi compartment prior to virion release. prM-E cleavage is inefficient, and many virions are only partially matured. These uncleaved prM would play a role in immune evasion. May play a role in virus budding. Exerts cytotoxic effects by activating a mitochondrial apoptotic pathway through M ectodomain. May display a viroporin activity. Its function is as follows. Binds to host cell surface receptor and mediates fusion between viral and cellular membranes. Envelope protein is synthesized in the endoplasmic reticulum in the form of heterodimer with protein prM. They play a role in virion budding in the ER, and the newly formed immature particle is covered with 60 spikes composed of heterodimer between precursor prM and envelope protein E. The virion is transported to the Golgi apparatus where the low pH causes dissociation of PrM-E heterodimers and formation of E homodimers. prM-E cleavage is inefficient, and many virions are only partially matured. These uncleaved prM would play a role in immune evasion. In terms of biological role, involved in immune evasion, pathogenesis and viral replication. Once cleaved off the polyprotein, is targeted to three destinations: the viral replication cycle, the plasma membrane and the extracellular compartment. Essential for viral replication. Required for formation of the replication complex and recruitment of other non-structural proteins to the ER-derived membrane structures. Excreted as a hexameric lipoparticle that plays a role against host immune response. Antagonizing the complement function. Binds to the host macrophages and dendritic cells. Inhibits signal transduction originating from Toll-like receptor 3 (TLR3). Functionally, component of the viral RNA replication complex that functions in virion assembly and antagonizes the host alpha/beta interferon antiviral response. Required cofactor for the serine protease function of NS3. May have membrane-destabilizing activity and form viroporins. Its function is as follows. Displays three enzymatic activities: serine protease, NTPase and RNA helicase. NS3 serine protease, in association with NS2B, performs its autocleavage and cleaves the polyprotein at dibasic sites in the cytoplasm: C-prM, NS2A-NS2B, NS2B-NS3, NS3-NS4A, NS4A-2K and NS4B-NS5. NS3 RNA helicase binds RNA and unwinds dsRNA in the 3' to 5' direction. In terms of biological role, regulates the ATPase activity of the NS3 helicase activity. NS4A allows NS3 helicase to conserve energy during unwinding. Functionally, functions as a signal peptide for NS4B and is required for the interferon antagonism activity of the latter. Induces the formation of ER-derived membrane vesicles where the viral replication takes place. Inhibits interferon (IFN)-induced host STAT1 phosphorylation and nuclear translocation, thereby preventing the establishment of cellular antiviral state by blocking the IFN-alpha/beta pathway. Inhibits STAT2 translocation in the nucleus after IFN-alpha treatment. Its function is as follows. Replicates the viral (+) and (-) RNA genome, and performs the capping of genomes in the cytoplasm. NS5 methylates viral RNA cap at guanine N-7 and ribose 2'-O positions. Besides its role in RNA genome replication, also prevents the establishment of cellular antiviral state by blocking the interferon-alpha/beta (IFN-alpha/beta) signaling pathway. Inhibits host TYK2 and STAT2 phosphorylation, thereby preventing activation of JAK-STAT signaling pathway. This is Genome polyprotein from Agelaius tricolor (Tricolored blackbird).